A 195-amino-acid chain; its full sequence is Peptidyl-tRNA hydrolase (195 aa).

Y17 serves as a coordination point for tRNA. The Proton acceptor role is filled by H22. TRNA is bound by residues F68, N70, and N116.

Belongs to the PTH family. Monomer.

The protein localises to the cytoplasm. It carries out the reaction an N-acyl-L-alpha-aminoacyl-tRNA + H2O = an N-acyl-L-amino acid + a tRNA + H(+). Its function is as follows. Hydrolyzes ribosome-free peptidyl-tRNAs (with 1 or more amino acids incorporated), which drop off the ribosome during protein synthesis, or as a result of ribosome stalling. Catalyzes the release of premature peptidyl moieties from peptidyl-tRNA molecules trapped in stalled 50S ribosomal subunits, and thus maintains levels of free tRNAs and 50S ribosomes. The sequence is that of Peptidyl-tRNA hydrolase from Shewanella denitrificans (strain OS217 / ATCC BAA-1090 / DSM 15013).